Here is a 192-residue protein sequence, read N- to C-terminus: Small ribosomal subunit protein eS7 (192 aa).

The protein belongs to the eukaryotic ribosomal protein eS7 family.

The chain is Small ribosomal subunit protein eS7 (RpS7) from Anopheles gambiae (African malaria mosquito).